The following is a 297-amino-acid chain: Acetyl-coenzyme A carboxylase carboxyl transferase subunit beta (297 aa).

Residues 27 to 296 enclose the CoA carboxyltransferase N-terminal domain; that stretch reads LWHKCPSCEA…PEAAKEVAAV (270 aa). The Zn(2+) site is built by cysteine 31, cysteine 34, cysteine 50, and cysteine 53. The C4-type zinc-finger motif lies at 31-53; the sequence is CPSCEAVLYRPELEKTLDVCPKC.

Belongs to the AccD/PCCB family. As to quaternary structure, acetyl-CoA carboxylase is a heterohexamer composed of biotin carboxyl carrier protein (AccB), biotin carboxylase (AccC) and two subunits each of ACCase subunit alpha (AccA) and ACCase subunit beta (AccD). Zn(2+) is required as a cofactor.

It localises to the cytoplasm. It catalyses the reaction N(6)-carboxybiotinyl-L-lysyl-[protein] + acetyl-CoA = N(6)-biotinyl-L-lysyl-[protein] + malonyl-CoA. It participates in lipid metabolism; malonyl-CoA biosynthesis; malonyl-CoA from acetyl-CoA: step 1/1. Functionally, component of the acetyl coenzyme A carboxylase (ACC) complex. Biotin carboxylase (BC) catalyzes the carboxylation of biotin on its carrier protein (BCCP) and then the CO(2) group is transferred by the transcarboxylase to acetyl-CoA to form malonyl-CoA. This is Acetyl-coenzyme A carboxylase carboxyl transferase subunit beta from Pseudomonas entomophila (strain L48).